A 99-amino-acid chain; its full sequence is DNA-binding protein HU (99 aa).

It belongs to the bacterial histone-like protein family. Homodimer.

Functionally, histone-like DNA-binding protein which is capable of wrapping DNA to stabilize it, and thus to prevent its denaturation under extreme environmental conditions. The polypeptide is DNA-binding protein HU (hup) (Rickettsia typhi (strain ATCC VR-144 / Wilmington)).